The primary structure comprises 87 residues: Small ribosomal subunit protein bS20 (87 aa).

Positions 1–10 (MANIKSKQKR) are enriched in basic residues. The interval 1–27 (MANIKSKQKRILTNEKSRQRNKSVRSA) is disordered.

This sequence belongs to the bacterial ribosomal protein bS20 family.

In terms of biological role, binds directly to 16S ribosomal RNA. The protein is Small ribosomal subunit protein bS20 of Corynebacterium aurimucosum (strain ATCC 700975 / DSM 44827 / CIP 107346 / CN-1) (Corynebacterium nigricans).